A 76-amino-acid polypeptide reads, in one-letter code: Small ribosomal subunit protein uS17 (76 aa).

This sequence belongs to the universal ribosomal protein uS17 family. As to quaternary structure, part of the 30S ribosomal subunit.

Functionally, one of the primary rRNA binding proteins, it binds specifically to the 5'-end of 16S ribosomal RNA. The protein is Small ribosomal subunit protein uS17 of Ruegeria sp. (strain TM1040) (Silicibacter sp.).